The sequence spans 487 residues: GTPase Der (487 aa).

EngA-type G domains are found at residues 3–166 (PVIA…PRDA) and 193–366 (IKIA…KSAV). GTP is bound by residues 9–16 (GRPNVGKS), 56–60 (DTGGI), 118–121 (NKID), 199–206 (GRPNVGKS), 246–250 (DTAGV), and 311–314 (NKWD). The region spanning 367-451 (TRWPTSRLTQ…PIRIEYKGGE (85 aa)) is the KH-like domain. A compositionally biased stretch (basic and acidic residues) spans 449–461 (GGENPFEGKKNTL). The tract at residues 449–487 (GGENPFEGKKNTLTDRQVNKKRRLMSHHKKAEKKRRDKR) is disordered. Residues 467–487 (NKKRRLMSHHKKAEKKRRDKR) show a composition bias toward basic residues.

The protein belongs to the TRAFAC class TrmE-Era-EngA-EngB-Septin-like GTPase superfamily. EngA (Der) GTPase family. Associates with the 50S ribosomal subunit.

Functionally, GTPase that plays an essential role in the late steps of ribosome biogenesis. The polypeptide is GTPase Der (Pseudomonas putida (strain GB-1)).